Consider the following 336-residue polypeptide: UDP-glucose 4-epimerase (336 aa).

NAD(+)-binding positions include 11-12 (YI), 31-36 (DNLINS), 58-59 (DI), 80-84 (FAGLK), asparagine 99, serine 124, tyrosine 149, lysine 153, and phenylalanine 178. Positions 124 and 149 each coordinate substrate. Tyrosine 149 (proton acceptor) is an active-site residue. Substrate contacts are provided by residues asparagine 179, 199 to 200 (NL), 216 to 218 (LVY), arginine 231, and 290 to 293 (RPGD).

This sequence belongs to the NAD(P)-dependent epimerase/dehydratase family. In terms of assembly, homodimer. It depends on NAD(+) as a cofactor.

It carries out the reaction UDP-alpha-D-glucose = UDP-alpha-D-galactose. Its pathway is carbohydrate metabolism; galactose metabolism. Its function is as follows. Involved in the metabolism of galactose. Catalyzes the conversion of UDP-galactose (UDP-Gal) to UDP-glucose (UDP-Glc) through a mechanism involving the transient reduction of NAD. This is UDP-glucose 4-epimerase (galE) from Yersinia enterocolitica.